A 194-amino-acid polypeptide reads, in one-letter code: CASP-like protein 4C1 (194 aa).

Topologically, residues 1-35 are cytoplasmic; that stretch reads MRSPHAFRNGESPTLRDHTHFHSTVTAQKLRRFNS. The chain crosses the membrane as a helical span at residues 36–56; the sequence is LILLLRLASFSFSLASAVFML. The Extracellular portion of the chain corresponds to 57 to 74; it reads TNSRGSASPHWYDFDAFR. A helical transmembrane segment spans residues 75 to 95; it reads FVFVANAIVALYSVFEMGTCV. The Cytoplasmic segment spans residues 96-114; it reads WEFSRETTLWPEAFQVWFD. A helical membrane pass occupies residues 115 to 135; it reads FGHDQVFSYLLLSAGSAAAAL. Over 136–157 the chain is Extracellular; the sequence is ARTMRGGDTCTANKAFCLQSDV. The helical transmembrane segment at 158–178 threads the bilayer; that stretch reads AIGLGFAAFLFLAFSSCFSGF. The Cytoplasmic segment spans residues 179–194; it reads RVACFLITGSRFHLYS.

The protein belongs to the Casparian strip membrane proteins (CASP) family. As to quaternary structure, homodimer and heterodimers.

The protein localises to the cell membrane. This chain is CASP-like protein 4C1, found in Arabidopsis thaliana (Mouse-ear cress).